A 218-amino-acid polypeptide reads, in one-letter code: Small ribosomal subunit protein uS3c (218 aa).

The KH type-2 domain maps to 47 to 118 (VQKNMRIFSG…KLNIAITRIG (72 aa)).

This sequence belongs to the universal ribosomal protein uS3 family. As to quaternary structure, part of the 30S ribosomal subunit.

The protein resides in the plastid. It localises to the chloroplast. This Cucumis sativus (Cucumber) protein is Small ribosomal subunit protein uS3c (rps3).